The primary structure comprises 299 residues: Fluorinase (299 aa).

Residues Asp16, Asp21 to Ser23, Tyr77, Ser158, Asp210, Asn215, Ser269 to Arg270, and Arg277 to Ala279 each bind S-adenosyl-L-methionine.

In terms of assembly, homohexamer; dimers of trimer.

It catalyses the reaction fluoride + S-adenosyl-L-methionine = 5'-deoxy-5'-fluoroadenosine + L-methionine. With respect to regulation, competitively inhibited by S-adenosyl-L-homocysteine (AdoHcy) and S-adenosyl-L-homocysteine (SAH). Sinefungin is only weakly inhibitory. Functionally, involved in the biosynthesis of fluorometabolites. Catalyzes the formation of a C-F bond by combining S-adenosyl-L-methionine (SAM) and fluoride to generate 5'-fluoro-5'-deoxyadenosine (5'-FDA) and L-methionine. It can also use 2'-deoxyadenosine in place of adenosine as substrate. This is Fluorinase from Streptantibioticus cattleyicolor (Streptomyces cattleya).